Consider the following 384-residue polypeptide: PqqA peptide cyclase (384 aa).

The region spanning 5 to 220 (VGLPLWLLAE…TNEYREKLKA (216 aa)) is the Radical SAM core domain. 3 residues coordinate [4Fe-4S] cluster: Cys19, Cys23, and Cys26.

Belongs to the radical SAM superfamily. PqqE family. In terms of assembly, interacts with PqqD. The interaction is necessary for activity of PqqE. Requires [4Fe-4S] cluster as cofactor.

It catalyses the reaction [PQQ precursor protein] + S-adenosyl-L-methionine = E-Y cross-linked-[PQQ precursor protein] + 5'-deoxyadenosine + L-methionine + H(+). Its pathway is cofactor biosynthesis; pyrroloquinoline quinone biosynthesis. Functionally, catalyzes the cross-linking of a glutamate residue and a tyrosine residue in the PqqA protein as part of the biosynthesis of pyrroloquinoline quinone (PQQ). The polypeptide is PqqA peptide cyclase (Acinetobacter baumannii (strain ACICU)).